We begin with the raw amino-acid sequence, 364 residues long: DNA replication and repair protein RecF (364 aa).

Residue 23–30 (GPNGIGKS) participates in ATP binding.

This sequence belongs to the RecF family.

Its subcellular location is the cytoplasm. In terms of biological role, the RecF protein is involved in DNA metabolism; it is required for DNA replication and normal SOS inducibility. RecF binds preferentially to single-stranded, linear DNA. It also seems to bind ATP. The chain is DNA replication and repair protein RecF from Synechococcus sp. (strain CC9605).